Here is a 600-residue protein sequence, read N- to C-terminus: Mediator of RNA polymerase II transcription subunit 26 (600 aa).

The TFIIS N-terminal domain occupies 10 to 87 (QIRDRLLQAI…RSWQKLIEPA (78 aa)). Disordered regions lie at residues 99–330 (GATG…RRLE), 348–402 (HQRL…PRDY), and 431–461 (TRQI…ELDK). Basic and acidic residues predominate over residues 123 to 133 (SIHDLKSRNDL). Residues 175-197 (PNSSPLPTNGISGSPESFASSLD) show a composition bias toward polar residues. A compositionally biased stretch (basic and acidic residues) spans 207 to 218 (SRLERDENDKHS). The segment covering 314 to 324 (SPLPLAQPSTP) has biased composition (pro residues). Residues 441–461 (EPVRADSPVHMEQQSRTELDK) are compositionally biased toward basic and acidic residues. Phosphoserine occurs at positions 447, 470, and 535.

This sequence belongs to the Mediator complex subunit 26 family. In terms of assembly, component of the Mediator complex, which is composed of MED1, MED4, MED6, MED7, MED8, MED9, MED10, MED11, MED12, MED13, MED13L, MED14, MED15, MED16, MED17, MED18, MED19, MED20, MED21, MED22, MED23, MED24, MED25, MED26, MED27, MED29, MED30, MED31, CCNC, CDK8 and CDC2L6/CDK11. The MED12, MED13, CCNC and CDK8 subunits form a distinct module termed the CDK8 module. Mediator containing the CDK8 module is less active than Mediator lacking this module in supporting transcriptional activation. Individual preparations of the Mediator complex lacking one or more distinct subunits have been variously termed ARC, CRSP, DRIP, PC2, SMCC and TRAP. Interacts with CEBPB (when not methylated).

It localises to the nucleus. Its function is as follows. Component of the Mediator complex, a coactivator involved in the regulated transcription of nearly all RNA polymerase II-dependent genes. Mediator functions as a bridge to convey information from gene-specific regulatory proteins to the basal RNA polymerase II transcription machinery. Mediator is recruited to promoters by direct interactions with regulatory proteins and serves as a scaffold for the assembly of a functional pre-initiation complex with RNA polymerase II and the general transcription factors. This is Mediator of RNA polymerase II transcription subunit 26 (MED26) from Homo sapiens (Human).